Consider the following 603-residue polypeptide: Grainyhead-like protein 3 homolog (603 aa).

The interval 30–95 (EAWKTYLENP…QGKKFYHSMD (66 aa)) is transcription activation. Positions 226 to 461 (GLKSDFEYTL…DLETQPVLFI (236 aa)) constitute a Grh/CP2 DB domain.

Belongs to the grh/CP2 family. Grainyhead subfamily. Homodimer, also forms heterodimers with GRHL1 and GRHL2. Interacts with LMO4.

The protein resides in the nucleus. In terms of biological role, transcription factor playing important roles in primary neurulation and in the differentiation of stratified epithelia of both ectodermal and endodermal origin. Binds directly to the consensus DNA sequence 5'-AACCGGTT-3' acting as an activator and repressor on distinct target genes. Essential for epidermal differentiation and barrier formation at the end of embryogenesis with TGM3 as critical direct target. Exhibits functional redundancy with GRHL2 in epidermal morphogenetic events such as eyelid fusion and epidermal wound repair. Despite being dispensable during normal epidermal homeostasis in the adulthood, is again required for barrier repair after immune-mediated epidermal damage, regulates distinct gene batteries in embryonic epidermal differentiation and adult epidermal barrier reformation after injury. Plays unique and cooperative roles with GRHL2 in establishing distinct zones of primary neurulation. Essential for spinal closure, functions cooperatively with GRHL2 in closure 2 (forebrain/midbrain boundary) and posterior neuropore closure. Also required for proper development of the oral periderm. No genetic interaction with GRHL1, no functional cooperativity due to diverse target gene selectivity. The polypeptide is Grainyhead-like protein 3 homolog (Mus musculus (Mouse)).